The following is a 182-amino-acid chain: Testis-expressed protein 29 (182 aa).

Topologically, residues 1-56 are extracellular; it reads MRYTTDIKKSPPQLLKTFAVCDISLYDICDYNVTRDQCKELGCCFYKGVCYKKVVP. Residues 57-77 form a helical membrane-spanning segment; the sequence is IYVQMFSTLIVLVTGIIIITI. At 78–182 the chain is on the cytoplasmic side; the sequence is IYRIVQEIKR…PPTDPSENPP (105 aa). Residues 91–182 form a disordered region; that stretch reads LSMNSTPKAS…PPTDPSENPP (92 aa). A compositionally biased stretch (low complexity) spans 115–170; it reads RAPSRSPSRTSSTLSSRSPTTAPTTAPTTDPATDPATDPATDPATDPATDPATDPA. Over residues 171 to 182 the composition is skewed to pro residues; the sequence is TAPPTDPSENPP.

It is found in the membrane. The protein is Testis-expressed protein 29 (Tex29) of Rattus norvegicus (Rat).